The primary structure comprises 1235 residues: Topoisomerase 1-associated factor 1 (1235 aa).

Disordered stretches follow at residues 327–357, 584–610, 812–841, and 897–1235; these read RERKMDNSKTFRPPRRARKPEMEPKDLGPPV, GEEAEDVGVPEDNDADDSGDDEQHAER, EGAADGEAADERSNKSAPPHITIRPDTEAR, and EFSP…SDEE. Positions 585–603 are enriched in acidic residues; that stretch reads EEAEDVGVPEDNDADDSGD. The span at 929–947 shows a compositional bias: acidic residues; it reads DDDEEEIRGFLGDDDDEDF. Basic residues predominate over residues 964–973; the sequence is QKKRQRKRRR. Residues 977–986 show a composition bias toward acidic residues; the sequence is SGDEEDEGVS. Basic and acidic residues predominate over residues 999-1044; sequence EKELEKIRKIKSEMYVHASDDETDDERDREFFERERKRQETKDSKF. 2 stretches are compositionally biased toward acidic residues: residues 1070–1081 and 1099–1118; these read VLDDEPESDESE and SEEEQEEEEEEEEEEDSDEE. Residues 1124-1150 are compositionally biased toward basic residues; sequence AKSKTSKRKAAVPSKRPARRPGTAKKR. The span at 1156-1170 shows a compositional bias: acidic residues; sequence SDNDEDEDEEEDAMD. Basic and acidic residues predominate over residues 1193–1202; it reads LGRRIDKMAM. Acidic residues predominate over residues 1203 to 1212; the sequence is DDGDEDEDDQ.

It belongs to the timeless family. In terms of assembly, component of the fork protection complex (FPC) consisting of tof-1 and csm-3.

The protein localises to the nucleus. Functionally, forms a fork protection complex (FPC) with csm-3 and which is required for chromosome segregation during meiosis and DNA damage repair. FPC coordinates leading and lagging strand synthesis and moves with the replication fork. FPC stabilizes replication forks in a configuration that is recognized by replication checkpoint sensors. This chain is Topoisomerase 1-associated factor 1 (tof-1), found in Neurospora crassa (strain ATCC 24698 / 74-OR23-1A / CBS 708.71 / DSM 1257 / FGSC 987).